A 982-amino-acid chain; its full sequence is Mineralocorticoid receptor (982 aa).

The tract at residues 1-601 (METKGYHSLP…STGSSRPSKI (601 aa)) is modulating. A compositionally biased stretch (polar residues) spans 230–242 (QGTPLTCSPNVEN). 2 disordered regions span residues 230–328 (QGTP…AAST) and 345–375 (SGTS…PFPK). Phosphoserine occurs at positions 249, 258, 282, 286, and 298. A compositionally biased stretch (low complexity) spans 258–299 (SPLSSPLSSMKSSISSPPSHCSVKSPVSSPNNVTPRSSVSSP). Positions 300–328 (ANINNSRCSVSSPSNTNNRSTLSSPAAST) are enriched in polar residues. The segment covering 345–354 (SGTSAGSSTS) has biased composition (low complexity). The Zn(2+) site is built by Cys602, Cys605, Cys619, Cys622, Cys638, Cys644, Cys654, and Cys657. 2 NR C4-type zinc fingers span residues 602 to 622 (CLVC…CGSC) and 638 to 662 (CAGR…LQKC). Positions 602 to 667 (CLVCGDEASG…RLQKCLQAGM (66 aa)) form a DNA-binding region, nuclear receptor. The tract at residues 668-723 (NLGARRSKKLGKLKGIHEEQPQQQPPPPPPPPQSPEEGTTYIAPAKEPSVNTALVP) is hinge. A disordered region spans residues 682-708 (GIHEEQPQQQPPPPPPPPQSPEEGTTY). A compositionally biased stretch (pro residues) spans 690–701 (QQPPPPPPPPQS). One can recognise an NR LBD domain in the interval 724-962 (QLSAISRALT…EFPAMLVEII (239 aa)). 21-hydroxyprogesterone contacts are provided by Asn768 and Gln774. The aldosterone site is built by Asn768 and Gln774. Progesterone contacts are provided by Asn768 and Gln774. An important for coactivator binding region spans residues 780-783 (KWAK). The 21-hydroxyprogesterone site is built by Arg815 and Thr943. 2 residues coordinate aldosterone: Arg815 and Thr943. 2 residues coordinate progesterone: Arg815 and Thr943.

Belongs to the nuclear hormone receptor family. NR3 subfamily. In terms of processing, phosphorylated. As to expression, expressed in hippocampus, being restricted to the more superficial cortical layers.

Its subcellular location is the cytoplasm. The protein resides in the nucleus. Functionally, receptor for both mineralocorticoids (MC) such as aldosterone and glucocorticoids (GC) such as corticosterone or cortisol. Binds to mineralocorticoid response elements (MRE) and transactivates target genes. The effect of MC is to increase ion and water transport and thus raise extracellular fluid volume and blood pressure and lower potassium levels. The polypeptide is Mineralocorticoid receptor (NR3C2) (Saimiri sciureus (Common squirrel monkey)).